Here is a 740-residue protein sequence, read N- to C-terminus: DNA ligase (740 aa).

The disordered stretch occupies residues 1-20 (MGPGLTLSGMTEQSSLFPAP). Residues 56–60 (DAEYD), 105–106 (SI), and Glu142 contribute to the NAD(+) site. Residue Lys144 is the N6-AMP-lysine intermediate of the active site. Residues Arg165, Glu201, Lys322, and Lys346 each contribute to the NAD(+) site. Zn(2+) is bound by residues Cys471, Cys474, Cys489, and Cys495. A BRCT domain is found at 654 to 740 (AATLPLAGMT…RGAPPNAGGG (87 aa)).

The protein belongs to the NAD-dependent DNA ligase family. LigA subfamily. The cofactor is Mg(2+). Requires Mn(2+) as cofactor.

The enzyme catalyses NAD(+) + (deoxyribonucleotide)n-3'-hydroxyl + 5'-phospho-(deoxyribonucleotide)m = (deoxyribonucleotide)n+m + AMP + beta-nicotinamide D-nucleotide.. DNA ligase that catalyzes the formation of phosphodiester linkages between 5'-phosphoryl and 3'-hydroxyl groups in double-stranded DNA using NAD as a coenzyme and as the energy source for the reaction. It is essential for DNA replication and repair of damaged DNA. This Acidovorax ebreus (strain TPSY) (Diaphorobacter sp. (strain TPSY)) protein is DNA ligase.